The sequence spans 326 residues: Ig gamma-1 chain C region (326 aa).

The segment at 1–97 (AETTAPSVYP…ASSTKVDKKI (97 aa)) is CH1. An intrachain disulfide couples cysteine 27 to cysteine 82. A hinge region spans residues 98–112 (VPRNCGGDCKPCICT). The CH2 stretch occupies residues 113–219 (GSEVSSVFIF…PIEKTISKPE (107 aa)). 2 disulfide bridges follow: cysteine 140–cysteine 200 and cysteine 246–cysteine 304. The N-linked (GlcNAc...) asparagine glycan is linked to asparagine 176. The tract at residues 220 to 326 (GRTQVPHVYT…EKSLSHSPGK (107 aa)) is CH3.

This chain is Ig gamma-1 chain C region, found in Rattus norvegicus (Rat).